A 217-amino-acid polypeptide reads, in one-letter code: 3,4-dihydroxy-2-butanone 4-phosphate synthase (217 aa).

D-ribulose 5-phosphate contacts are provided by residues 37–38, aspartate 42, 150–154, and glutamate 174; these read RE and RRGHT. Residue glutamate 38 participates in Mg(2+) binding. Residue histidine 153 coordinates Mg(2+).

This sequence belongs to the DHBP synthase family. In terms of assembly, homodimer. Requires Mg(2+) as cofactor. Mn(2+) serves as cofactor.

It catalyses the reaction D-ribulose 5-phosphate = (2S)-2-hydroxy-3-oxobutyl phosphate + formate + H(+). The protein operates within cofactor biosynthesis; riboflavin biosynthesis; 2-hydroxy-3-oxobutyl phosphate from D-ribulose 5-phosphate: step 1/1. Functionally, catalyzes the conversion of D-ribulose 5-phosphate to formate and 3,4-dihydroxy-2-butanone 4-phosphate. The polypeptide is 3,4-dihydroxy-2-butanone 4-phosphate synthase (Shewanella oneidensis (strain ATCC 700550 / JCM 31522 / CIP 106686 / LMG 19005 / NCIMB 14063 / MR-1)).